Reading from the N-terminus, the 407-residue chain is Arylacetamide deacetylase-like 3 (407 aa).

An Involved in the stabilization of the negatively charged intermediate by the formation of the oxyanion hole motif is present at residues His119–Gly121. Residues Ser193, Asp347, and His377 contribute to the active site.

It belongs to the 'GDXG' lipolytic enzyme family.

The protein is Arylacetamide deacetylase-like 3 (AADACL3) of Homo sapiens (Human).